The primary structure comprises 114 residues: Probable gas vesicle protein J2 (114 aa).

Over residues 1 to 10 (MTDLDHRYPG) the composition is skewed to basic and acidic residues. The disordered stretch occupies residues 1 to 21 (MTDLDHRYPGEETEPYGPPSG).

This sequence belongs to the gas vesicle GvpA family. Interacts with GvpA.

Its subcellular location is the gas vesicle. Its function is as follows. A minor component of the gas vesicle, might be involved in nucleating gas vesicle formation. Gas vesicles (GV) are hollow, gas filled proteinaceous nanostructures. It is not clear what function GVs perform in soil bacteria. The protein is Probable gas vesicle protein J2 of Streptomyces coelicolor (strain ATCC BAA-471 / A3(2) / M145).